The primary structure comprises 689 residues: Glycine--tRNA ligase beta subunit (689 aa).

It belongs to the class-II aminoacyl-tRNA synthetase family. As to quaternary structure, tetramer of two alpha and two beta subunits.

The protein resides in the cytoplasm. It catalyses the reaction tRNA(Gly) + glycine + ATP = glycyl-tRNA(Gly) + AMP + diphosphate. This is Glycine--tRNA ligase beta subunit from Photorhabdus laumondii subsp. laumondii (strain DSM 15139 / CIP 105565 / TT01) (Photorhabdus luminescens subsp. laumondii).